Reading from the N-terminus, the 196-residue chain is dTTP/UTP pyrophosphatase (196 aa).

Aspartate 78 functions as the Proton acceptor in the catalytic mechanism.

Belongs to the Maf family. YhdE subfamily. A divalent metal cation serves as cofactor.

The protein localises to the cytoplasm. The catalysed reaction is dTTP + H2O = dTMP + diphosphate + H(+). It catalyses the reaction UTP + H2O = UMP + diphosphate + H(+). In terms of biological role, nucleoside triphosphate pyrophosphatase that hydrolyzes dTTP and UTP. May have a dual role in cell division arrest and in preventing the incorporation of modified nucleotides into cellular nucleic acids. The protein is dTTP/UTP pyrophosphatase of Photobacterium profundum (strain SS9).